A 94-amino-acid chain; its full sequence is Large ribosomal subunit protein uL22 (94 aa).

Belongs to the universal ribosomal protein uL22 family. In terms of assembly, part of the 50S ribosomal subunit.

Its function is as follows. This protein binds specifically to 23S rRNA; its binding is stimulated by other ribosomal proteins, e.g. L4, L17, and L20. It is important during the early stages of 50S assembly. It makes multiple contacts with different domains of the 23S rRNA in the assembled 50S subunit and ribosome. Functionally, the globular domain of the protein is located near the polypeptide exit tunnel on the outside of the subunit, while an extended beta-hairpin is found that lines the wall of the exit tunnel in the center of the 70S ribosome. This Tomato big bud phytoplasma protein is Large ribosomal subunit protein uL22 (rplV).